Here is a 317-residue protein sequence, read N- to C-terminus: Ribosomal protein L11 methyltransferase (317 aa).

Thr158, Gly179, Asp201, and Asn244 together coordinate S-adenosyl-L-methionine.

The protein belongs to the methyltransferase superfamily. PrmA family.

The protein localises to the cytoplasm. The catalysed reaction is L-lysyl-[protein] + 3 S-adenosyl-L-methionine = N(6),N(6),N(6)-trimethyl-L-lysyl-[protein] + 3 S-adenosyl-L-homocysteine + 3 H(+). In terms of biological role, methylates ribosomal protein L11. This chain is Ribosomal protein L11 methyltransferase, found in Streptococcus pyogenes serotype M28 (strain MGAS6180).